The primary structure comprises 211 residues: Thymidylate kinase (211 aa).

10 to 17 provides a ligand contact to ATP; that stretch reads GPDGAGKT.

This sequence belongs to the thymidylate kinase family.

The catalysed reaction is dTMP + ATP = dTDP + ADP. In terms of biological role, phosphorylation of dTMP to form dTDP in both de novo and salvage pathways of dTTP synthesis. This chain is Thymidylate kinase (tmk), found in Lactococcus lactis subsp. lactis (strain IL1403) (Streptococcus lactis).